Consider the following 122-residue polypeptide: Large ribosomal subunit protein uL14c (122 aa).

It belongs to the universal ribosomal protein uL14 family. As to quaternary structure, part of the 50S ribosomal subunit.

It is found in the plastid. It localises to the chloroplast. Its function is as follows. Binds to 23S rRNA. The protein is Large ribosomal subunit protein uL14c of Cryptomeria japonica (Japanese cedar).